Consider the following 340-residue polypeptide: Phosphate acyltransferase (340 aa).

This sequence belongs to the PlsX family. As to quaternary structure, homodimer. Probably interacts with PlsY.

It is found in the cytoplasm. It catalyses the reaction a fatty acyl-[ACP] + phosphate = an acyl phosphate + holo-[ACP]. It functions in the pathway lipid metabolism; phospholipid metabolism. Catalyzes the reversible formation of acyl-phosphate (acyl-PO(4)) from acyl-[acyl-carrier-protein] (acyl-ACP). This enzyme utilizes acyl-ACP as fatty acyl donor, but not acyl-CoA. The sequence is that of Phosphate acyltransferase from Pseudomonas syringae pv. syringae (strain B728a).